The sequence spans 752 residues: Photosystem I P700 chlorophyll a apoprotein A1 (752 aa).

Helical transmembrane passes span 73–96 (IFSAHFGQLAVIFLWISGMHFHGA), 159–182 (LYWIAIGGLIMSALMLFAGWFHYH), 198–222 (MNHHLAGLLGLGCLSWSGHQIHIAL), 294–312 (IAHHHLALSVLFIFAGHMY), 349–372 (WHAQLAINLAMMGSLSIIVAHHMY), 388–414 (LSLFTHHMWIGGFCVVGGAAHGAIFMV), 436–458 (AIISHLNWVCIFLGCHSFGLYIH), and 533–551 (FMVHHIHAFTIHVTVLILL). Residues Cys575 and Cys584 each coordinate [4Fe-4S] cluster. 2 consecutive transmembrane segments (helical) span residues 591-612 (HVFLGLFWMYNSISVVIFHFSW) and 666-688 (SSAYGLIFLGAHFIWAFSLMFLF). His677 provides a ligand contact to chlorophyll a'. 2 residues coordinate chlorophyll a: Met685 and Tyr693. Residue Trp694 coordinates phylloquinone. A helical membrane pass occupies residues 726–746 (AVGLAHYLLGGIGTTWSFFLA).

This sequence belongs to the PsaA/PsaB family. As to quaternary structure, the PsaA/B heterodimer binds the P700 chlorophyll special pair and subsequent electron acceptors. PSI consists of a core antenna complex that captures photons, and an electron transfer chain that converts photonic excitation into a charge separation. The eukaryotic PSI reaction center is composed of at least 11 subunits. Requires P700 is a chlorophyll a/chlorophyll a' dimer, A0 is one or more chlorophyll a, A1 is one or both phylloquinones and FX is a shared 4Fe-4S iron-sulfur center. as cofactor.

The protein localises to the plastid. It localises to the chloroplast thylakoid membrane. It carries out the reaction reduced [plastocyanin] + hnu + oxidized [2Fe-2S]-[ferredoxin] = oxidized [plastocyanin] + reduced [2Fe-2S]-[ferredoxin]. In terms of biological role, psaA and PsaB bind P700, the primary electron donor of photosystem I (PSI), as well as the electron acceptors A0, A1 and FX. PSI is a plastocyanin/cytochrome c6-ferredoxin oxidoreductase, converting photonic excitation into a charge separation, which transfers an electron from the donor P700 chlorophyll pair to the spectroscopically characterized acceptors A0, A1, FX, FA and FB in turn. Oxidized P700 is reduced on the lumenal side of the thylakoid membrane by plastocyanin or cytochrome c6. The chain is Photosystem I P700 chlorophyll a apoprotein A1 from Trieres chinensis (Marine centric diatom).